Consider the following 166-residue polypeptide: UPF0304 protein PBPRA2768 (166 aa).

This sequence belongs to the UPF0304 family.

The polypeptide is UPF0304 protein PBPRA2768 (Photobacterium profundum (strain SS9)).